The chain runs to 98 residues: Aspartyl/glutamyl-tRNA(Asn/Gln) amidotransferase subunit C (98 aa).

This sequence belongs to the GatC family. Heterotrimer of A, B and C subunits.

The enzyme catalyses L-glutamyl-tRNA(Gln) + L-glutamine + ATP + H2O = L-glutaminyl-tRNA(Gln) + L-glutamate + ADP + phosphate + H(+). It carries out the reaction L-aspartyl-tRNA(Asn) + L-glutamine + ATP + H2O = L-asparaginyl-tRNA(Asn) + L-glutamate + ADP + phosphate + 2 H(+). Allows the formation of correctly charged Asn-tRNA(Asn) or Gln-tRNA(Gln) through the transamidation of misacylated Asp-tRNA(Asn) or Glu-tRNA(Gln) in organisms which lack either or both of asparaginyl-tRNA or glutaminyl-tRNA synthetases. The reaction takes place in the presence of glutamine and ATP through an activated phospho-Asp-tRNA(Asn) or phospho-Glu-tRNA(Gln). The polypeptide is Aspartyl/glutamyl-tRNA(Asn/Gln) amidotransferase subunit C (Gloeothece citriformis (strain PCC 7424) (Cyanothece sp. (strain PCC 7424))).